A 381-amino-acid polypeptide reads, in one-letter code: Succinate--CoA ligase [ADP-forming] subunit beta (381 aa).

The ATP-grasp domain maps to 9–236 (KTIFADAGIP…ESYEDDLERK (228 aa)). Residues Lys-45, 52-54 (GRG), Glu-91, Val-94, and Glu-99 each bind ATP. Positions 191 and 205 each coordinate Mg(2+). Substrate contacts are provided by residues Asn-256 and 313–315 (GIT).

Belongs to the succinate/malate CoA ligase beta subunit family. In terms of assembly, heterotetramer of two alpha and two beta subunits. Mg(2+) serves as cofactor.

The catalysed reaction is succinate + ATP + CoA = succinyl-CoA + ADP + phosphate. It catalyses the reaction GTP + succinate + CoA = succinyl-CoA + GDP + phosphate. The protein operates within carbohydrate metabolism; tricarboxylic acid cycle; succinate from succinyl-CoA (ligase route): step 1/1. Functionally, succinyl-CoA synthetase functions in the citric acid cycle (TCA), coupling the hydrolysis of succinyl-CoA to the synthesis of either ATP or GTP and thus represents the only step of substrate-level phosphorylation in the TCA. The beta subunit provides nucleotide specificity of the enzyme and binds the substrate succinate, while the binding sites for coenzyme A and phosphate are found in the alpha subunit. The sequence is that of Succinate--CoA ligase [ADP-forming] subunit beta from Halorubrum lacusprofundi (strain ATCC 49239 / DSM 5036 / JCM 8891 / ACAM 34).